The sequence spans 132 residues: NLP effector protein 15 (132 aa).

The short motif at 1–9 (MYSWYFPKD) is the Conserved undecapeptide motif I element. The Hepta-peptide GHRHDWE motif II signature appears at 16 to 22 (GHRHDWE).

The protein belongs to the Necrosis inducing protein (NPP1) family.

It localises to the secreted. In terms of biological role, secreted effector that contributes moderately to virulence during infection by P.capsici. Causes only small yellow areas at 3 days after inoculation of host C.annuum leaves; these areas expand somewhat and became necrotic at 7 days after inoculation. Leads only to chlorotic areas, without necrosis at 7 days after non-host N.benthamiana leaves infection. The protein is NLP effector protein 15 of Phytophthora capsici.